The following is a 136-amino-acid chain: UPF0310 protein HH_1062 (136 aa).

This sequence belongs to the UPF0310 family.

The chain is UPF0310 protein HH_1062 from Helicobacter hepaticus (strain ATCC 51449 / 3B1).